The chain runs to 157 residues: Crossover junction endodeoxyribonuclease RuvC (157 aa).

Active-site residues include Asp7, Glu70, and Asp142. Mg(2+) contacts are provided by Asp7, Glu70, and Asp142.

This sequence belongs to the RuvC family. Homodimer which binds Holliday junction (HJ) DNA. The HJ becomes 2-fold symmetrical on binding to RuvC with unstacked arms; it has a different conformation from HJ DNA in complex with RuvA. In the full resolvosome a probable DNA-RuvA(4)-RuvB(12)-RuvC(2) complex forms which resolves the HJ. The cofactor is Mg(2+).

The protein localises to the cytoplasm. The catalysed reaction is Endonucleolytic cleavage at a junction such as a reciprocal single-stranded crossover between two homologous DNA duplexes (Holliday junction).. Functionally, the RuvA-RuvB-RuvC complex processes Holliday junction (HJ) DNA during genetic recombination and DNA repair. Endonuclease that resolves HJ intermediates. Cleaves cruciform DNA by making single-stranded nicks across the HJ at symmetrical positions within the homologous arms, yielding a 5'-phosphate and a 3'-hydroxyl group; requires a central core of homology in the junction. The consensus cleavage sequence is 5'-(A/T)TT(C/G)-3'. Cleavage occurs on the 3'-side of the TT dinucleotide at the point of strand exchange. HJ branch migration catalyzed by RuvA-RuvB allows RuvC to scan DNA until it finds its consensus sequence, where it cleaves and resolves the cruciform DNA. The sequence is that of Crossover junction endodeoxyribonuclease RuvC from Synechococcus sp. (strain RCC307).